A 520-amino-acid polypeptide reads, in one-letter code: Kelch domain-containing protein 4 (520 aa).

A compositionally biased stretch (basic residues) spans 1-10; sequence MGKKGKKEKK. A disordered region spans residues 1–33; it reads MGKKGKKEKKGRGAEKTAAKMEKKVSKRSRKEE. Residues 11 to 24 are compositionally biased toward basic and acidic residues; the sequence is GRGAEKTAAKMEKK. Kelch repeat units lie at residues 77-129, 133-187, 188-241, 243-289, and 308-361; these read ELIL…VVPQ, QLWV…AWKR, QLIL…VTPQ, GIVV…MNPS, and QTLF…RRGR. Disordered regions lie at residues 346 to 379, 402 to 431, and 481 to 520; these read QLKG…AGTQ, LTAP…GPCP, and DPET…GAED. Phosphoserine is present on residues serine 413 and serine 418. The Kelch 6 repeat unit spans residues 443-494; that stretch reads VLYVYGGMFEAGDRQVTLSDLHCLDLHRMEAWKALVEMDPETQEWLEETDSE.

The sequence is that of Kelch domain-containing protein 4 (KLHDC4) from Homo sapiens (Human).